A 298-amino-acid polypeptide reads, in one-letter code: Probable endonuclease 4 (298 aa).

Residues His-69, His-111, Glu-146, Asp-180, His-183, His-215, Asp-228, His-230, and Glu-260 each contribute to the Zn(2+) site.

This sequence belongs to the AP endonuclease 2 family. The cofactor is Zn(2+).

The enzyme catalyses Endonucleolytic cleavage to 5'-phosphooligonucleotide end-products.. Functionally, endonuclease IV plays a role in DNA repair. It cleaves phosphodiester bonds at apurinic or apyrimidinic (AP) sites, generating a 3'-hydroxyl group and a 5'-terminal sugar phosphate. The chain is Probable endonuclease 4 from Bacillus cereus (strain AH820).